The sequence spans 66 residues: UPF0434 protein Nwi_0075 (66 aa).

It belongs to the UPF0434 family.

This is UPF0434 protein Nwi_0075 from Nitrobacter winogradskyi (strain ATCC 25391 / DSM 10237 / CIP 104748 / NCIMB 11846 / Nb-255).